The sequence spans 177 residues: Large ribosomal subunit protein uL5 (177 aa).

This sequence belongs to the universal ribosomal protein uL5 family. As to quaternary structure, part of the 50S ribosomal subunit; part of the 5S rRNA/L5/L18/L25 subcomplex. Contacts the 5S rRNA and the P site tRNA. Forms a bridge to the 30S subunit in the 70S ribosome.

Functionally, this is one of the proteins that bind and probably mediate the attachment of the 5S RNA into the large ribosomal subunit, where it forms part of the central protuberance. In the 70S ribosome it contacts protein S13 of the 30S subunit (bridge B1b), connecting the 2 subunits; this bridge is implicated in subunit movement. Contacts the P site tRNA; the 5S rRNA and some of its associated proteins might help stabilize positioning of ribosome-bound tRNAs. The polypeptide is Large ribosomal subunit protein uL5 (Ehrlichia chaffeensis (strain ATCC CRL-10679 / Arkansas)).